We begin with the raw amino-acid sequence, 577 residues long: Probable ATP-dependent RNA helicase DDX55 homolog (577 aa).

A Q motif motif is present at residues 7-37 (AVATKTYREKLGPEILEVFDKSYKSFTDVQV). Positions 40-218 (GTHLLNLSDV…VFGLRNAKQV (179 aa)) constitute a Helicase ATP-binding domain. 53–60 (SPTGSGKT) is an ATP binding site. The DEAD box motif lies at 166–169 (DEAD). The Helicase C-terminal domain maps to 231–393 (TLKNYFVECP…EVKVPTSTSR (163 aa)). Residues 508–577 (AKEKKRREKE…LSKKEIKDVL (70 aa)) form a disordered region. Over residues 510–530 (EKKRREKEARKMKRAGGRFKS) the composition is skewed to basic residues.

This sequence belongs to the DEAD box helicase family. DDX55/SPB4 subfamily.

The enzyme catalyses ATP + H2O = ADP + phosphate + H(+). Functionally, probable ATP-binding RNA helicase. This chain is Probable ATP-dependent RNA helicase DDX55 homolog, found in Caenorhabditis briggsae.